Reading from the N-terminus, the 361-residue chain is Ribosomal RNA large subunit methyltransferase M (361 aa).

S-adenosyl-L-methionine is bound by residues Ser193, 226–229, Asp245, Asp265, and Asp283; that span reads CPGG. Lys312 functions as the Proton acceptor in the catalytic mechanism.

The protein belongs to the class I-like SAM-binding methyltransferase superfamily. RNA methyltransferase RlmE family. RlmM subfamily. In terms of assembly, monomer.

Its subcellular location is the cytoplasm. The enzyme catalyses cytidine(2498) in 23S rRNA + S-adenosyl-L-methionine = 2'-O-methylcytidine(2498) in 23S rRNA + S-adenosyl-L-homocysteine + H(+). Catalyzes the 2'-O-methylation at nucleotide C2498 in 23S rRNA. This is Ribosomal RNA large subunit methyltransferase M from Histophilus somni (strain 129Pt) (Haemophilus somnus).